We begin with the raw amino-acid sequence, 353 residues long: MLSKVRIALDAMGGDVGPAVVIPGAAISLQRHSATEFLLVGDRARIEPELEKHPALKAASRIVHTDVAVSGSDKPSQALRRGRRTSSMWLAIDAVKKGEADVAVSAGNTGALMAMSRFHLRTLPGIDRPAITGIWPTKRGESVVLDLGATIGGDAHHLVSLAVMGAAMASVLFNKPRPTVGLLNIGAEEIKGHEEIREASEILRARNLPELDYIGFVEGDGIGKGLADVIVAEGFSGNIALKAAEGTARQMAELLRNEMQRSWLSKLGYLFARSAFQALRDKMDPNKSNGGVFLGLNGLVVKSHGGTSAEGFAYAIDVGYEMAHYDLLNKINQMLNREGGALNSVQAAQEAVS.

Belongs to the PlsX family. In terms of assembly, homodimer. Probably interacts with PlsY.

Its subcellular location is the cytoplasm. It catalyses the reaction a fatty acyl-[ACP] + phosphate = an acyl phosphate + holo-[ACP]. It functions in the pathway lipid metabolism; phospholipid metabolism. In terms of biological role, catalyzes the reversible formation of acyl-phosphate (acyl-PO(4)) from acyl-[acyl-carrier-protein] (acyl-ACP). This enzyme utilizes acyl-ACP as fatty acyl donor, but not acyl-CoA. This is Phosphate acyltransferase from Bradyrhizobium diazoefficiens (strain JCM 10833 / BCRC 13528 / IAM 13628 / NBRC 14792 / USDA 110).